A 366-amino-acid chain; its full sequence is Protein BIG GRAIN 1-like B (366 aa).

Disordered stretches follow at residues 42–73 (DSST…DFNR) and 129–148 (FERS…EHGS). Positions 56-73 (QNREDTRVSANRRDDFNR) are enriched in basic and acidic residues.

This sequence belongs to the BIG GRAIN 1 (BG1) plant protein family.

The protein localises to the cell membrane. Functionally, involved in auxin transport. Regulator of the auxin signaling pathway. The sequence is that of Protein BIG GRAIN 1-like B from Arabidopsis thaliana (Mouse-ear cress).